Reading from the N-terminus, the 248-residue chain is Ribosomal RNA small subunit methyltransferase J (248 aa).

Residues 98–99 (RD), 114–115 (ER), 150–151 (SS), and Asp168 each bind S-adenosyl-L-methionine.

It belongs to the methyltransferase superfamily. RsmJ family.

It is found in the cytoplasm. It catalyses the reaction guanosine(1516) in 16S rRNA + S-adenosyl-L-methionine = N(2)-methylguanosine(1516) in 16S rRNA + S-adenosyl-L-homocysteine + H(+). Its function is as follows. Specifically methylates the guanosine in position 1516 of 16S rRNA. The sequence is that of Ribosomal RNA small subunit methyltransferase J from Shewanella baltica (strain OS195).